Here is a 519-residue protein sequence, read N- to C-terminus: Fatty acid--[acyl-carrier-protein] ligase ScoC (519 aa).

Thr-167 provides a ligand contact to Mg(2+). ATP contacts are provided by Ile-216 and Thr-312. Mg(2+) is bound at residue Glu-313. Residues Asp-394 and Lys-411 each contribute to the ATP site.

Belongs to the ATP-dependent AMP-binding enzyme family. It depends on Mg(2+) as a cofactor.

It catalyses the reaction a medium-chain fatty acid + holo-[ACP] + ATP = a medium-chain fatty acyl-[ACP] + AMP + diphosphate. The catalysed reaction is a medium-chain fatty acid + ATP + H(+) = a medium-chain fatty acyl-AMP + diphosphate. The enzyme catalyses a medium-chain fatty acyl-AMP + holo-[ACP] = a medium-chain fatty acyl-[ACP] + AMP + H(+). It carries out the reaction octanoate + holo-[ACP] + ATP = octanoyl-[ACP] + AMP + diphosphate. It catalyses the reaction octanoate + ATP + H(+) = octanoyl-AMP + diphosphate. The catalysed reaction is octanoyl-AMP + holo-[ACP] = octanoyl-[ACP] + AMP + H(+). The enzyme catalyses a (2E)-enoyl fatty acid + holo-[ACP] + ATP = a (2E)-enoyl-[ACP] + AMP + diphosphate. It carries out the reaction a (2E)-enoyl fatty acid + ATP + H(+) = a (2E)-2-fatty-enoyl-AMP + diphosphate. It catalyses the reaction a (2E)-2-fatty-enoyl-AMP + holo-[ACP] = a (2E)-enoyl-[ACP] + AMP + H(+). The catalysed reaction is (2E)-2-butenoate + holo-[ACP] + ATP = (2E)-butenoyl-[ACP] + AMP + diphosphate. The enzyme catalyses (2E)-2-butenoate + ATP + H(+) = (2E)-but-2-enoyl-AMP + diphosphate. It carries out the reaction (2E)-but-2-enoyl-AMP + holo-[ACP] = (2E)-butenoyl-[ACP] + AMP + H(+). It catalyses the reaction a (3R)-3-isocyanyl-fatty acid + holo-[ACP] + ATP = a (3R)-3-isocyanyl-fatty acyl-[ACP] + AMP + diphosphate. The catalysed reaction is a (3R)-3-isocyanyl-fatty acid + ATP + H(+) = a (3R)-3-isocyanyl-fatty acyl-AMP + diphosphate. The enzyme catalyses a (3R)-3-isocyanyl-fatty acyl-AMP + holo-[ACP] = a (3R)-3-isocyanyl-fatty acyl-[ACP] + AMP + H(+). It carries out the reaction (3R)-3-isocyanylbutanoate + holo-[ACP] + ATP = (3R)-3-isocyanylbutanoyl-[ACP] + AMP + diphosphate. It catalyses the reaction (3R)-3-isocyanylbutanoate + ATP + H(+) = (3R)-3-isocyanylbutanoyl-AMP + diphosphate. The catalysed reaction is (3R)-3-isocyanylbutanoyl-AMP + holo-[ACP] = (3R)-3-isocyanylbutanoyl-[ACP] + AMP + H(+). Functionally, acyl:acyl-carrier protein ligase involved in the biosynthesis of a unique class of isonitrile lipopeptides (INLPs). Shows a strong preference for fatty acids with a short/medium-chain length (C4-C8) in vitro, and accepts alpha,beta-unsaturated fatty acids such as crotonate, which seems to be a physiological substrate. Acts twice during the INLP pathway, catalyzing the activation of crotonate ((2E)-2-butenoate) as well as (3R)-3-isocyanylbutanoate as acyl-adenylates (acyl-AMP), and then the acyl transfer to the dedicated acyl-carrier protein ScoB. This chain is Fatty acid--[acyl-carrier-protein] ligase ScoC, found in Streptomyces coeruleorubidus.